The sequence spans 79 residues: UPF0180 protein BCB4264_A1446 (79 aa).

It belongs to the UPF0180 family.

This is UPF0180 protein BCB4264_A1446 from Bacillus cereus (strain B4264).